Reading from the N-terminus, the 152-residue chain is Snaclec lebecin subunit alpha (152 aa).

Positions 1–23 (MGRSISVSFGLLVVFLSLSGTGA) are cleaved as a signal peptide. Disulfide bonds link Cys-27–Cys-38, Cys-54–Cys-147, and Cys-122–Cys-139. Residues 34–148 (YEGGCYYVFD…CELAYHFICS (115 aa)) form the C-type lectin domain.

As to quaternary structure, heterodimer with the beta subunit (AC W5XCJ6); disulfide-linked. In terms of tissue distribution, expressed by the venom gland.

The protein resides in the secreted. Functionally, inhibits human breast cancer cells (MDA-MB231) migration and proliferation, as well as their adhesion to fibrinogen and fibronectin. This inhibition may be due to the binding to receptors of the integrin family, probably alpha-v/beta-3 (ITGAV/ITGB3) (40% inhibition of cell adhesion) and alpha-5/beta-1 (ITGA5/ITGB1) (by comparison with lebectin). The chain is Snaclec lebecin subunit alpha from Macrovipera lebetinus (Levantine viper).